The chain runs to 168 residues: Cyclic pyranopterin monophosphate synthase (168 aa).

Residues 81–83 (LCH) and 117–118 (ME) contribute to the substrate site. Asp-132 is a catalytic residue.

This sequence belongs to the MoaC family. In terms of assembly, homohexamer; trimer of dimers.

It carries out the reaction (8S)-3',8-cyclo-7,8-dihydroguanosine 5'-triphosphate = cyclic pyranopterin phosphate + diphosphate. It participates in cofactor biosynthesis; molybdopterin biosynthesis. In terms of biological role, catalyzes the conversion of (8S)-3',8-cyclo-7,8-dihydroguanosine 5'-triphosphate to cyclic pyranopterin monophosphate (cPMP). The sequence is that of Cyclic pyranopterin monophosphate synthase from Deinococcus radiodurans (strain ATCC 13939 / DSM 20539 / JCM 16871 / CCUG 27074 / LMG 4051 / NBRC 15346 / NCIMB 9279 / VKM B-1422 / R1).